The following is a 1162-amino-acid chain: Glycerophosphocholine phosphodiesterase GDE1 (1162 aa).

Residues 1–155 (MKFGKTYVTH…TSILSQHSGV (155 aa)) enclose the SPX domain. ANK repeat units lie at residues 346–375 (YHRT…KWGL), 392–421 (EGLT…AQTL), 423–452 (CPNL…DVNY), 458–487 (RNET…NTEI), 492–521 (FGWT…SYDI), and 525–554 (SGWL…KLLL). Residues 817–1146 (TRVIGHRGLG…DSVLAVREGL (330 aa)) enclose the GP-PDE domain.

The protein belongs to the GDE1 family.

The protein localises to the cytoplasm. It carries out the reaction sn-glycerol 3-phosphocholine + H2O = sn-glycerol 3-phosphate + choline + H(+). Its function is as follows. Glycerophosphocholine glycerophosphodiesterase responsible for the hydrolysis of intracellular glycerophosphocholine into glycerol-phosphate and choline. The choline is used for phosphatidyl-choline synthesis. Required for utilization of glycerophosphocholine as phosphate source. C.albicans can utilize GroPCho through transport and intracellular hydrolysis or through extracellular hydrolysis. In Candida albicans (strain SC5314 / ATCC MYA-2876) (Yeast), this protein is Glycerophosphocholine phosphodiesterase GDE1.